A 200-amino-acid polypeptide reads, in one-letter code: Transcription factor FapR (200 aa).

It belongs to the FapR family.

In terms of biological role, transcriptional factor involved in regulation of membrane lipid biosynthesis by repressing genes involved in fatty acid and phospholipid metabolism. This Caldanaerobacter subterraneus subsp. tengcongensis (strain DSM 15242 / JCM 11007 / NBRC 100824 / MB4) (Thermoanaerobacter tengcongensis) protein is Transcription factor FapR.